Consider the following 348-residue polypeptide: Isopentenyl-diphosphate delta-isomerase (348 aa).

9 to 10 contacts substrate; it reads RK. Residues 68-70, serine 98, and asparagine 127 contribute to the FMN site; that span reads AMT. Glutamine 157 contributes to the substrate binding site. Glutamate 158 lines the Mg(2+) pocket. FMN is bound by residues lysine 188, serine 213, threonine 218, and 286 to 287; that span reads AG.

It belongs to the IPP isomerase type 2 family. As to quaternary structure, homooctamer. Dimer of tetramers. Requires FMN as cofactor. It depends on NADPH as a cofactor. The cofactor is Mg(2+).

It is found in the cytoplasm. It carries out the reaction isopentenyl diphosphate = dimethylallyl diphosphate. In terms of biological role, involved in the biosynthesis of isoprenoids. Catalyzes the 1,3-allylic rearrangement of the homoallylic substrate isopentenyl (IPP) to its allylic isomer, dimethylallyl diphosphate (DMAPP). The chain is Isopentenyl-diphosphate delta-isomerase from Limosilactobacillus reuteri (strain DSM 20016) (Lactobacillus reuteri).